Consider the following 298-residue polypeptide: Zinc-alpha-2-glycoprotein (298 aa).

A signal peptide spans 1-20 (MVRMVPVLLSLLLLLGPAVP). Pyrrolidone carboxylic acid is present on glutamine 21. N-linked (GlcNAc...) (complex) asparagine glycosylation occurs at asparagine 109. Asparagine 112 is a glycosylation site (N-linked (GlcNAc...) asparagine). 2 disulfides stabilise this stretch: cysteine 123-cysteine 186 and cysteine 225-cysteine 280. Residue asparagine 128 is glycosylated (N-linked (GlcNAc...) (complex) asparagine). In terms of domain architecture, Ig-like C1-type spans 207–292 (PSVVVTSHQA…QHSSLAQPLV (86 aa)). Asparagine 259 carries N-linked (GlcNAc...) asparagine glycosylation.

Belongs to the MHC class I family. As to quaternary structure, interacts with PIP. Post-translationally, N-glycosylated. N-glycan at Asn-128: Hex5HexNAc4. As to expression, blood plasma, seminal plasma, urine, saliva, sweat, epithelial cells of various human glands, liver.

It localises to the secreted. In terms of biological role, stimulates lipid degradation in adipocytes and causes the extensive fat losses associated with some advanced cancers. May bind polyunsaturated fatty acids. The chain is Zinc-alpha-2-glycoprotein (AZGP1) from Homo sapiens (Human).